Consider the following 298-residue polypeptide: 4-hydroxy-3-methylbut-2-enyl diphosphate reductase (298 aa).

Cys-12 is a binding site for [4Fe-4S] cluster. Positions 40 and 78 each coordinate (2E)-4-hydroxy-3-methylbut-2-enyl diphosphate. Residues His-40 and His-78 each coordinate dimethylallyl diphosphate. The isopentenyl diphosphate site is built by His-40 and His-78. [4Fe-4S] cluster is bound at residue Cys-100. His-128 contributes to the (2E)-4-hydroxy-3-methylbut-2-enyl diphosphate binding site. His-128 serves as a coordination point for dimethylallyl diphosphate. Residue His-128 participates in isopentenyl diphosphate binding. The active-site Proton donor is the Glu-130. Residue Thr-171 participates in (2E)-4-hydroxy-3-methylbut-2-enyl diphosphate binding. Cys-200 is a [4Fe-4S] cluster binding site. Residues Ser-228, Ser-229, Asn-230, and Ser-270 each contribute to the (2E)-4-hydroxy-3-methylbut-2-enyl diphosphate site. Positions 228, 229, 230, and 270 each coordinate dimethylallyl diphosphate. Isopentenyl diphosphate contacts are provided by Ser-228, Ser-229, Asn-230, and Ser-270.

Belongs to the IspH family. The cofactor is [4Fe-4S] cluster.

It catalyses the reaction isopentenyl diphosphate + 2 oxidized [2Fe-2S]-[ferredoxin] + H2O = (2E)-4-hydroxy-3-methylbut-2-enyl diphosphate + 2 reduced [2Fe-2S]-[ferredoxin] + 2 H(+). It carries out the reaction dimethylallyl diphosphate + 2 oxidized [2Fe-2S]-[ferredoxin] + H2O = (2E)-4-hydroxy-3-methylbut-2-enyl diphosphate + 2 reduced [2Fe-2S]-[ferredoxin] + 2 H(+). It functions in the pathway isoprenoid biosynthesis; dimethylallyl diphosphate biosynthesis; dimethylallyl diphosphate from (2E)-4-hydroxy-3-methylbutenyl diphosphate: step 1/1. It participates in isoprenoid biosynthesis; isopentenyl diphosphate biosynthesis via DXP pathway; isopentenyl diphosphate from 1-deoxy-D-xylulose 5-phosphate: step 6/6. Its function is as follows. Catalyzes the conversion of 1-hydroxy-2-methyl-2-(E)-butenyl 4-diphosphate (HMBPP) into a mixture of isopentenyl diphosphate (IPP) and dimethylallyl diphosphate (DMAPP). Acts in the terminal step of the DOXP/MEP pathway for isoprenoid precursor biosynthesis. The polypeptide is 4-hydroxy-3-methylbut-2-enyl diphosphate reductase (Kosmotoga olearia (strain ATCC BAA-1733 / DSM 21960 / TBF 19.5.1)).